Here is a 113-residue protein sequence, read N- to C-terminus: Ranasmurfin (113 aa).

Tyr2 is subject to 2',4',5'-topaquinone. Residues 2-31 (YACSFPPSEIPGSKECLAEALQKHQGFKKK) constitute a cross-link (lysine tyrosylquinone (Tyr-Lys)). 3 disulfides stabilise this stretch: Cys4/Cys62, Cys17/Cys65, and Cys37/Cys101. At Ser9 the chain carries Aminomalonic acid (Ser); in chain B. Positions 17–65 (CLAEALQKHQGFKKKSYALICAYLNYKEDAENYERAAEDFDSAVKCTGC) form a cross-link, S-cysteinyl 3-(oxidosulfanyl)alanine (Cys-Cys); in chain B. The lysine tyrosylquinone (Lys-Tyr) cross-link spans 30–108 (KKSYALICAY…SLCTLFQKLY (79 aa)). Cys65 is modified (cysteine sulfenic acid (-SOH); in chain B). 2',4',5'-topaquinone is present on Tyr108. Zn(2+)-binding residues include Tyr108 and His112. Tyr108 is covalently cross-linked (5'-tyrosyl-5'-aminotyrosine (Tyr-Tyr) (interchain with Y-108)).

Homodimer. The two chains, designated A and B, differ in their modifications, but not, it is thought, in their sequence. The cofactor is Zn(2+). As to expression, foam nest.

It localises to the secreted. The sequence is that of Ranasmurfin from Polypedates leucomystax (Common tree frog).